We begin with the raw amino-acid sequence, 415 residues long: Carboxypeptidase B (415 aa).

The signal sequence occupies residues 1–13; the sequence is MLLLLALVSVALA. Positions 14–108 are cleaved as a propeptide — activation peptide; the sequence is HASEEHFDGN…LESQFDSHTR (95 aa). One can recognise a Peptidase M14 domain in the interval 116 to 410; it reads KYNKWETIEA…LAVKYIANYV (295 aa). An intrachain disulfide couples Cys-171 to Cys-184. His-174 and Glu-177 together coordinate Zn(2+). Substrate contacts are provided by residues 174-177, Arg-232, and 249-250; these read HARE and NR. Cystine bridges form between Cys-243–Cys-266 and Cys-257–Cys-271. His-302 is a binding site for Zn(2+). Substrate is bound by residues 303 to 304 and Tyr-354; that span reads SY. Glu-376 serves as the catalytic Proton donor/acceptor.

The protein belongs to the peptidase M14 family. It depends on Zn(2+) as a cofactor.

Its subcellular location is the secreted. It localises to the zymogen granule lumen. The enzyme catalyses Preferential release of a C-terminal lysine or arginine amino acid.. The sequence is that of Carboxypeptidase B (Cpb1) from Rattus norvegicus (Rat).